A 350-amino-acid polypeptide reads, in one-letter code: tRNA N6-adenosine threonylcarbamoyltransferase (350 aa).

The Fe cation site is built by His-113 and His-117. Residues 135–139 (LVSGG), Asp-169, Gly-182, Asp-186, and Asn-282 contribute to the substrate site. Fe cation is bound at residue Asp-310.

It belongs to the KAE1 / TsaD family. The cofactor is Fe(2+).

Its subcellular location is the cytoplasm. It carries out the reaction L-threonylcarbamoyladenylate + adenosine(37) in tRNA = N(6)-L-threonylcarbamoyladenosine(37) in tRNA + AMP + H(+). In terms of biological role, required for the formation of a threonylcarbamoyl group on adenosine at position 37 (t(6)A37) in tRNAs that read codons beginning with adenine. Is involved in the transfer of the threonylcarbamoyl moiety of threonylcarbamoyl-AMP (TC-AMP) to the N6 group of A37, together with TsaE and TsaB. TsaD likely plays a direct catalytic role in this reaction. This Corynebacterium diphtheriae (strain ATCC 700971 / NCTC 13129 / Biotype gravis) protein is tRNA N6-adenosine threonylcarbamoyltransferase.